Here is a 251-residue protein sequence, read N- to C-terminus: Hydroxyacylglutathione hydrolase (251 aa).

7 residues coordinate Zn(2+): His53, His55, Asp57, His58, His110, Asp127, and His165.

Belongs to the metallo-beta-lactamase superfamily. Glyoxalase II family. As to quaternary structure, monomer. Zn(2+) is required as a cofactor.

The catalysed reaction is an S-(2-hydroxyacyl)glutathione + H2O = a 2-hydroxy carboxylate + glutathione + H(+). It functions in the pathway secondary metabolite metabolism; methylglyoxal degradation; (R)-lactate from methylglyoxal: step 2/2. In terms of biological role, thiolesterase that catalyzes the hydrolysis of S-D-lactoyl-glutathione to form glutathione and D-lactic acid. The sequence is that of Hydroxyacylglutathione hydrolase from Escherichia coli (strain SMS-3-5 / SECEC).